The chain runs to 227 residues: Elongation factor 1-beta (227 aa).

Positions 2–90 constitute a GST C-terminal domain; the sequence is GFGDLKSPAG…PVNIEDTTGS (89 aa). Residues 83–120 form a disordered region; it reads NIEDTTGSAAKETKEEDDDDIDLFGSDDEEESEDAKRV. The segment covering 97–115 has biased composition (acidic residues); it reads EEDDDDIDLFGSDDEEESE. Ser108 is subject to Phosphoserine; by CK2.

The protein belongs to the EF-1-beta/EF-1-delta family. In terms of assembly, EF-1 is composed of 4 subunits: alpha, beta (alpha subunit of the eEF1B subcomplex), delta (beta subunit of the eEF1B subcomplex), and gamma (gamma subunit of the eEF1B subcomplex). Interacts with elongation factor EEF1A1. Phosphorylation affects the GDP/GTP exchange rate.

In terms of biological role, catalytic subunit of the guanine nucleotide exchange factor (GEF) (eEF1B subcomplex) of the eukaryotic elongation factor 1 complex (eEF1). Stimulates the exchange of GDP for GTP on elongation factor 1A (eEF1A), probably by displacing GDP from the nucleotide binding pocket in eEF1A. This is Elongation factor 1-beta (eef1b) from Xenopus laevis (African clawed frog).